Here is a 31-residue protein sequence, read N- to C-terminus: Cytochrome b6-f complex subunit 6 (31 aa).

The helical transmembrane segment at 4 to 24 (ITSYFGFLLAVLIITSSLFIG) threads the bilayer.

This sequence belongs to the PetL family. As to quaternary structure, the 4 large subunits of the cytochrome b6-f complex are cytochrome b6, subunit IV (17 kDa polypeptide, PetD), cytochrome f and the Rieske protein, while the 4 small subunits are PetG, PetL, PetM and PetN. The complex functions as a dimer.

The protein resides in the plastid. The protein localises to the chloroplast thylakoid membrane. Functionally, component of the cytochrome b6-f complex, which mediates electron transfer between photosystem II (PSII) and photosystem I (PSI), cyclic electron flow around PSI, and state transitions. PetL is important for photoautotrophic growth as well as for electron transfer efficiency and stability of the cytochrome b6-f complex. The sequence is that of Cytochrome b6-f complex subunit 6 from Phaseolus vulgaris (Kidney bean).